The primary structure comprises 305 residues: UDP-3-O-acyl-N-acetylglucosamine deacetylase (305 aa).

Zn(2+) contacts are provided by His79, His238, and Asp242. Residue His265 is the Proton donor of the active site.

Belongs to the LpxC family. Requires Zn(2+) as cofactor.

The enzyme catalyses a UDP-3-O-[(3R)-3-hydroxyacyl]-N-acetyl-alpha-D-glucosamine + H2O = a UDP-3-O-[(3R)-3-hydroxyacyl]-alpha-D-glucosamine + acetate. It functions in the pathway glycolipid biosynthesis; lipid IV(A) biosynthesis; lipid IV(A) from (3R)-3-hydroxytetradecanoyl-[acyl-carrier-protein] and UDP-N-acetyl-alpha-D-glucosamine: step 2/6. Functionally, catalyzes the hydrolysis of UDP-3-O-myristoyl-N-acetylglucosamine to form UDP-3-O-myristoylglucosamine and acetate, the committed step in lipid A biosynthesis. This is UDP-3-O-acyl-N-acetylglucosamine deacetylase from Haemophilus influenzae (strain 86-028NP).